A 181-amino-acid chain; its full sequence is Keratin-associated protein 4-5 (181 aa).

A run of 26 repeats spans residues 5–9, 20–24, 25–29, 30–34, 35–39, 40–44, 45–49, 55–59, 60–64, 65–69, 70–74, 75–79, 80–84, 85–89, 90–94, 95–99, 100–104, 105–109, 110–114, 115–119, 120–124, 125–129, 130–134, 135–139, 140–144, and 145–149. A 26 X 5 AA repeats of C-C-[GRQVCHIEK]-[SPTR]-[VSTQYC] region spans residues 5 to 154; it reads CCGSVSSEQS…CCVRPVCGRV (150 aa).

Belongs to the KRTAP type 4 family. Interacts with hair keratins. In terms of tissue distribution, expressed in the hair follicles.

In terms of biological role, in the hair cortex, hair keratin intermediate filaments are embedded in an interfilamentous matrix, consisting of hair keratin-associated proteins (KRTAP), which are essential for the formation of a rigid and resistant hair shaft through their extensive disulfide bond cross-linking with abundant cysteine residues of hair keratins. The matrix proteins include the high-sulfur and high-glycine-tyrosine keratins. The polypeptide is Keratin-associated protein 4-5 (KRTAP4-5) (Homo sapiens (Human)).